Here is a 667-residue protein sequence, read N- to C-terminus: DNA ligase (667 aa).

Residues 32 to 36 (DKDYD) and 80 to 81 (SL) contribute to the NAD(+) site. Catalysis depends on lysine 121, which acts as the N6-AMP-lysine intermediate. Arginine 143, glutamate 178, and lysine 314 together coordinate NAD(+). Residues cysteine 407, cysteine 410, cysteine 423, and cysteine 429 each coordinate Zn(2+). In terms of domain architecture, BRCT spans 587-667 (IVESIFKDKT…EFEKMLGRES (81 aa)).

This sequence belongs to the NAD-dependent DNA ligase family. LigA subfamily. The cofactor is Mg(2+). It depends on Mn(2+) as a cofactor.

The enzyme catalyses NAD(+) + (deoxyribonucleotide)n-3'-hydroxyl + 5'-phospho-(deoxyribonucleotide)m = (deoxyribonucleotide)n+m + AMP + beta-nicotinamide D-nucleotide.. Functionally, DNA ligase that catalyzes the formation of phosphodiester linkages between 5'-phosphoryl and 3'-hydroxyl groups in double-stranded DNA using NAD as a coenzyme and as the energy source for the reaction. It is essential for DNA replication and repair of damaged DNA. The protein is DNA ligase of Clostridium botulinum (strain Alaska E43 / Type E3).